The sequence spans 328 residues: ATP-dependent 6-phosphofructokinase (328 aa).

Gly11 lines the ATP pocket. 21-25 (RAAVR) contributes to the ADP binding site. ATP is bound by residues 72–73 (RS) and 102–105 (GNGT). Position 103 (Asn103) interacts with Mg(2+). 126-128 (TID) is a binding site for substrate. Asp128 functions as the Proton acceptor in the catalytic mechanism. Arg155 provides a ligand contact to ADP. Substrate is bound by residues Arg163 and 170–172 (MGR). ADP is bound by residues 186–188 (GAE) and 214–216 (KAS). Substrate-binding positions include Glu223, Arg247, and 253–256 (HVQR).

Belongs to the phosphofructokinase type A (PFKA) family. ATP-dependent PFK group I subfamily. Prokaryotic clade 'B1' sub-subfamily. In terms of assembly, homotetramer. The cofactor is Mg(2+).

It is found in the cytoplasm. It catalyses the reaction beta-D-fructose 6-phosphate + ATP = beta-D-fructose 1,6-bisphosphate + ADP + H(+). It functions in the pathway carbohydrate degradation; glycolysis; D-glyceraldehyde 3-phosphate and glycerone phosphate from D-glucose: step 3/4. With respect to regulation, allosterically activated by ADP and other diphosphonucleosides, and allosterically inhibited by phosphoenolpyruvate. Its function is as follows. Catalyzes the phosphorylation of D-fructose 6-phosphate to fructose 1,6-bisphosphate by ATP, the first committing step of glycolysis. In Cytophaga hutchinsonii (strain ATCC 33406 / DSM 1761 / CIP 103989 / NBRC 15051 / NCIMB 9469 / D465), this protein is ATP-dependent 6-phosphofructokinase.